Here is a 209-residue protein sequence, read N- to C-terminus: Small ribosomal subunit protein uS4 (209 aa).

The 81-residue stretch at 99-179 (GRLDSVAYRM…FPEWIEVDAK (81 aa)) folds into the S4 RNA-binding domain.

Belongs to the universal ribosomal protein uS4 family. In terms of assembly, part of the 30S ribosomal subunit. Contacts protein S5. The interaction surface between S4 and S5 is involved in control of translational fidelity.

Functionally, one of the primary rRNA binding proteins, it binds directly to 16S rRNA where it nucleates assembly of the body of the 30S subunit. With S5 and S12 plays an important role in translational accuracy. The sequence is that of Small ribosomal subunit protein uS4 from Azoarcus sp. (strain BH72).